The primary structure comprises 194 residues: Ras-related protein Rab-22A (194 aa).

12–20 (GDTGVGKSS) lines the GTP pocket. An Effector region motif is present at residues 34-42 (INPTIGASF). Residues 60 to 64 (DTAGQ), 118 to 121 (NKCD), and 148 to 150 (SAK) contribute to the GTP site. Residues 174–194 (PSGGKGFKLRRQPSEPKRSCC) are disordered. A compositionally biased stretch (basic and acidic residues) spans 185-194 (QPSEPKRSCC). Residues cysteine 193 and cysteine 194 are each lipidated (S-geranylgeranyl cysteine).

This sequence belongs to the small GTPase superfamily. Rab family. As to quaternary structure, interacts directly with ZFYVE20. Binds EEA1. Interacts (in its GTP-bound form) with RABGEF1. Interacts (in its GTP-bound form) with RINL.

The protein localises to the endosome membrane. It localises to the cell membrane. It is found in the early endosome. The protein resides in the late endosome. Its subcellular location is the cell projection. The protein localises to the ruffle. It localises to the cytoplasmic vesicle. It is found in the phagosome. The protein resides in the phagosome membrane. Plays a role in endocytosis and intracellular protein transport. Mediates trafficking of TF from early endosomes to recycling endosomes. Required for NGF-mediated endocytosis of NTRK1, and subsequent neurite outgrowth. Binds GTP and GDP and has low GTPase activity. Alternates between a GTP-bound active form and a GDP-bound inactive form. In Homo sapiens (Human), this protein is Ras-related protein Rab-22A (RAB22A).